Consider the following 488-residue polypeptide: Mannosylglycerate hydrolase MGH1 (488 aa).

Residues tyrosine 94, 98–101, tyrosine 146, glutamine 167, and glycine 227 contribute to the substrate site; that span reads WNWD. Aspartate 229 functions as the Proton donor in the catalytic mechanism. Substrate-binding positions include arginine 262 and 415–416; that span reads YW. Glutamate 459 acts as the Proton acceptor in catalysis.

The protein belongs to the glycosyl hydrolase 63 family.

The catalysed reaction is (2R)-2-O-(alpha-D-mannosyl)-glycerate + H2O = D-mannose + (R)-glycerate. It catalyses the reaction (2R)-2-O-(alpha-D-glucopyranosyl)-glycerate + H2O = (R)-glycerate + D-glucose. Its activity is regulated as follows. Activity is not dependent on divalent cations, but it is enhanced by Mn(2+). Functionally, catalyzes the hydrolysis of alpha-D-mannosyl-glycerate (MG) to D-glycerate and D-mannose. Can also hydrolyze alpha-D-glucopyranosyl-glycerate (GG)with lower efficiency. This is Mannosylglycerate hydrolase MGH1 from Selaginella moellendorffii (Spikemoss).